We begin with the raw amino-acid sequence, 510 residues long: 2,3-bisphosphoglycerate-independent phosphoglycerate mutase (510 aa).

Residues aspartate 12 and serine 62 each coordinate Mn(2+). Residue serine 62 is the Phosphoserine intermediate of the active site. Substrate contacts are provided by residues histidine 123, 153–154, arginine 185, arginine 191, 260–263, and lysine 335; these read RD and RPDR. The Mn(2+) site is built by aspartate 402, histidine 406, aspartate 443, histidine 444, and histidine 461.

It belongs to the BPG-independent phosphoglycerate mutase family. In terms of assembly, monomer. It depends on Mn(2+) as a cofactor.

The catalysed reaction is (2R)-2-phosphoglycerate = (2R)-3-phosphoglycerate. It participates in carbohydrate degradation; glycolysis; pyruvate from D-glyceraldehyde 3-phosphate: step 3/5. Its function is as follows. Catalyzes the interconversion of 2-phosphoglycerate and 3-phosphoglycerate. The chain is 2,3-bisphosphoglycerate-independent phosphoglycerate mutase from Listeria innocua serovar 6a (strain ATCC BAA-680 / CLIP 11262).